The sequence spans 137 residues: Chaperone protein YscB (137 aa).

In terms of assembly, interacts with SycN to form a complex which specifically binds to YopN.

The protein resides in the cytoplasm. Its subcellular location is the cell inner membrane. In terms of biological role, functions as a specific chaperone for YopN. It could facilitate the secretion and the subsequent translocation of YopN. The polypeptide is Chaperone protein YscB (yscB) (Yersinia pestis).